We begin with the raw amino-acid sequence, 360 residues long: Phospho-N-acetylmuramoyl-pentapeptide-transferase (360 aa).

The next 10 helical transmembrane spans lie at 21–41, 74–94, 97–117, 135–155, 168–188, 199–219, 236–256, 263–283, 288–308, and 338–358; these read YVTFRAILGLMTALVFCLWWG, MGGILILAGIFISVLLWGDLG, YVWVVLFVLASFGLIGFIDDY, ILQSLAAIIIAFYLYASADTV, IMPQMGAFFIVLAYFTIVGSS, GLAIMPTVMVAAAFALIAYLS, AGELVIVCTAIVGAGLGFLWF, VFMGDVGSLALGAALGAIAVL, ILLVIMGGVFVMETVSVILQV, and VIVRFWIISLFLVMLGLATLK.

This sequence belongs to the glycosyltransferase 4 family. MraY subfamily. Mg(2+) is required as a cofactor.

The protein localises to the cell inner membrane. The enzyme catalyses UDP-N-acetyl-alpha-D-muramoyl-L-alanyl-gamma-D-glutamyl-meso-2,6-diaminopimeloyl-D-alanyl-D-alanine + di-trans,octa-cis-undecaprenyl phosphate = di-trans,octa-cis-undecaprenyl diphospho-N-acetyl-alpha-D-muramoyl-L-alanyl-D-glutamyl-meso-2,6-diaminopimeloyl-D-alanyl-D-alanine + UMP. It participates in cell wall biogenesis; peptidoglycan biosynthesis. Functionally, catalyzes the initial step of the lipid cycle reactions in the biosynthesis of the cell wall peptidoglycan: transfers peptidoglycan precursor phospho-MurNAc-pentapeptide from UDP-MurNAc-pentapeptide onto the lipid carrier undecaprenyl phosphate, yielding undecaprenyl-pyrophosphoryl-MurNAc-pentapeptide, known as lipid I. The polypeptide is Phospho-N-acetylmuramoyl-pentapeptide-transferase (Shewanella violacea (strain JCM 10179 / CIP 106290 / LMG 19151 / DSS12)).